The primary structure comprises 147 residues: uncharacterized protein (147 aa).

This is an uncharacterized protein from Mycolicibacterium smegmatis (Mycobacterium smegmatis).